A 417-amino-acid polypeptide reads, in one-letter code: Phosphoglycerate kinase 1 (417 aa).

The residue at position 2 (Ser2) is an N-acetylserine. Ser2 and Ser4 each carry phosphoserine. Residue Lys6 is modified to N6-succinyllysine. Lys11 carries the N6-acetyllysine modification. Val23, Asp24, Phe25, Asn26, Gln38, and Arg39 together coordinate (2R)-3-phosphoglycerate. The mitochondrial targeting region exposed following cis-trans isomerization by PIN1 and recognized by the TOM complex for mitochondrial translocation of the protein stretch occupies residues 38-43 (QRIKAA). Lys48 carries the N6-acetyllysine; alternate modification. Position 48 is an N6-succinyllysine; alternate (Lys48). Residues Ser62, His63, Gly65, and Arg66 each contribute to the (2R)-3-phosphoglycerate site. The residue at position 75 (Lys75) is an N6-acetyllysine. At Tyr76 the chain carries Phosphotyrosine. N6-acetyllysine occurs at positions 86 and 91. Lys97 is modified (N6-acetyllysine; alternate). At Lys97 the chain carries N6-(2-hydroxyisobutyryl)lysine; alternate. Leu122 and Arg123 together coordinate (2R)-3-phosphoglycerate. An N6-acetyllysine; alternate modification is found at Lys131. Position 131 is an N6-malonyllysine; alternate (Lys131). Lys146 carries the post-translational modification N6-acetyllysine. (2R)-3-phosphoglycerate-binding residues include His170 and Arg171. At Lys191 the chain carries N6-succinyllysine. Position 196 is a phosphotyrosine (Tyr196). Lys199 is modified (N6-acetyllysine). Ser203 carries the post-translational modification Phosphoserine. ADP is bound at residue Gly214. Gly214 lines the CDP pocket. The AMP site is built by Ala215 and Lys216. Ala215 is a binding site for ATP. Ala215 contributes to the Mg(2+) binding site. Lys216 bears the N6-(2-hydroxyisobutyryl)lysine mark. Mg(2+) is bound by residues Ala218 and Asp219. Asp219 contributes to the CDP binding site. Lys220 is an AMP binding site. Lys220 serves as a coordination point for ATP. At Lys220 the chain carries N6-(2-hydroxyisobutyryl)lysine. Residue Gly238 coordinates ADP. Gly238 is a CDP binding site. Gly239 is an AMP binding site. An ATP-binding site is contributed by Gly239. Residues Lys267 and Lys291 each carry the N6-acetyllysine modification. Position 313 (Gly313) interacts with AMP. Gly313 contributes to the ATP binding site. An N6-(2-hydroxyisobutyryl)lysine modification is found at Lys323. CDP is bound by residues Gly338, Val340, and Phe343. Residue Phe343 participates in ADP binding. Residue Glu344 coordinates AMP. Position 344 (Glu344) interacts with ATP. Lys361 is subject to N6-acetyllysine. Positions 375 and 376 each coordinate ATP. Residue Asp375 coordinates Mg(2+).

The protein belongs to the phosphoglycerate kinase family. Monomer. Interacts with kinase MAPK1/ERK2; the interaction is direct, occurs under hypoxic conditions, and promotes its interaction with PIN1. Interacts with peptidyl-prolyl cis-trans isomerase PIN1; the interaction is direct, occurs under hypoxic conditions, and targets the protein to the mitochondrion by promoting interactions with the TOM complex. Interacts with mitochondrial circRNA mcPGK1 (via its 2nd stem-loop); the interaction is direct and targets the protein to the mitochondrion by promoting interactions with the TOM complex. Interacts with pyruvate dehydrogenase kinase PDK1; the interaction is direct, occurs under hypoxic conditions and leads to PDK1-mediated inhibition of pyruvate dehydrogenase complex activity. Requires Mg(2+) as cofactor. In terms of processing, phosphorylated at Ser-203 by MAPK1/ERK2 under hypoxic conditions, which promotes its mitochondrial targeting.

It is found in the cytoplasm. It localises to the cytosol. The protein localises to the mitochondrion matrix. It carries out the reaction (2R)-3-phosphoglycerate + ATP = (2R)-3-phospho-glyceroyl phosphate + ADP. It catalyses the reaction L-seryl-[protein] + ATP = O-phospho-L-seryl-[protein] + ADP + H(+). It participates in carbohydrate degradation; glycolysis; pyruvate from D-glyceraldehyde 3-phosphate: step 2/5. Functionally, catalyzes one of the two ATP producing reactions in the glycolytic pathway via the reversible conversion of 1,3-diphosphoglycerate to 3-phosphoglycerate. Both L- and D- forms of purine and pyrimidine nucleotides can be used as substrates, but the activity is much lower on pyrimidines. In addition to its role as a glycolytic enzyme, it seems that PGK-1 acts as a polymerase alpha cofactor protein (primer recognition protein). Acts as a protein kinase when localized to the mitochondrion where it phosphorylates pyruvate dehydrogenase kinase PDK1 to inhibit pyruvate dehydrogenase complex activity and suppress the formation of acetyl-coenzyme A from pyruvate, and consequently inhibit oxidative phosphorylation and promote glycolysis. May play a role in sperm motility. This chain is Phosphoglycerate kinase 1 (PGK1), found in Cricetulus griseus (Chinese hamster).